We begin with the raw amino-acid sequence, 513 residues long: Cytochrome P450 86A1 (513 aa).

A helical membrane pass occupies residues 7-27 (ILTGYAVAALSVYALWFYFLS). C456 is a heme binding site.

This sequence belongs to the cytochrome P450 family. Heme serves as cofactor. In terms of tissue distribution, expressed in roots.

Its subcellular location is the membrane. It catalyses the reaction an omega-methyl-long-chain fatty acid + reduced [NADPH--hemoprotein reductase] + O2 = an omega-hydroxy-long-chain fatty acid + oxidized [NADPH--hemoprotein reductase] + H2O + H(+). Functionally, catalyzes the omega-hydroxylation of various fatty acids (FA). Acts on saturated and unsaturated fatty acids with chain lengths from C12 to C18 but not on hexadecane. The polypeptide is Cytochrome P450 86A1 (CYP86A1) (Arabidopsis thaliana (Mouse-ear cress)).